The chain runs to 401 residues: S-adenosylmethionine synthase (401 aa).

An ATP-binding site is contributed by 136-141 (GQGSVD).

Belongs to the AdoMet synthase 2 family. The cofactor is Mg(2+).

The enzyme catalyses L-methionine + ATP + H2O = S-adenosyl-L-methionine + phosphate + diphosphate. It participates in amino-acid biosynthesis; S-adenosyl-L-methionine biosynthesis; S-adenosyl-L-methionine from L-methionine: step 1/1. Catalyzes the formation of S-adenosylmethionine from methionine and ATP. This Pyrococcus horikoshii (strain ATCC 700860 / DSM 12428 / JCM 9974 / NBRC 100139 / OT-3) protein is S-adenosylmethionine synthase (mat).